Here is a 1145-residue protein sequence, read N- to C-terminus: Adenylate cyclase type 3 (1145 aa).

Over 1 to 79 the chain is Cytoplasmic; sequence MPRNQGFSDP…FKRQRHETLL (79 aa). Helical transmembrane passes span 80–100, 105–125, 139–159, 173–193, and 226–246; these read VLVV…AVVF, LAPL…FVLC, VPYL…GLNF, AFFV…IVII, and ILAN…SYYM. Mg(2+) is bound by residues Asp-324, Ile-325, and Asp-368. ATP-binding positions include 324–329 and 366–368; these read DIVGFT and LGD. Residues 381–401 form a helical membrane-spanning segment; that stretch reads EDHAVCSILMGLAMVEAISYV. Residues 402–631 are Cytoplasmic-facing; the sequence is REKTKTGVDM…RYSVEKEKQS (230 aa). An ATP-binding site is contributed by Arg-412. Residue Lys-465 forms a Glycyl lysine isopeptide (Lys-Gly) (interchain with G-Cter in SUMO3) linkage. Residues 504–564 are disordered; sequence QNGLNGSAVP…DNPSFPNPRR (61 aa). Composition is skewed to low complexity over residues 516–526 and 535–544; these read APASSKPSSPA and GSAHASGSTS. Ser-524 is modified (phosphoserine). Ser-579 carries the post-translational modification Phosphoserine. Transmembrane regions (helical) follow at residues 632–652, 663–683, and 707–727; these read GAAF…EILI, FVVG…AIFP, and WAML…LSCL. The N-linked (GlcNAc...) asparagine glycan is linked to Asn-735. Helical transmembrane passes span 753-773, 774-794, and 834-854; these read YNYV…VSHM, VKLT…LYAW, and LPLV…MLSF. Residues 855–1145 lie on the Cytoplasmic side of the membrane; sequence YYFSRHVEKL…TLPHQVVDNP (291 aa). Residues Lys-976, 1063–1065, and 1070–1074 each bind ATP; these read DIW and NVASR. At Ser-1077 the chain carries Phosphoserine; by CaMK2. Residue Lys-1110 participates in ATP binding.

The protein belongs to the adenylyl cyclase class-4/guanylyl cyclase family. Requires Mg(2+) as cofactor. It depends on Mn(2+) as a cofactor. N-glycosylated. In terms of processing, rapidly phosphorylated after stimulation by odorants or forskolin. Phosphorylation by CaMK2 at Ser-1077 down-regulates enzyme activity. Post-translationally, sumoylated. Sumoylation is required for targeting of olfactory cilia. In terms of tissue distribution, detected in the acrosomal region of epididymal spermatozoa, the acrosomal region of round spermatids and in elongating spermatids. Detected in cilia in the olfactory epithelium (at protein level). Detected in olfactory epithelium neurons. Detected in brain, testis, late pachytene spermatocytes, round spermatids and elongating spermatids.

Its subcellular location is the cell membrane. It localises to the cell projection. The protein resides in the cilium. It is found in the golgi apparatus. The protein localises to the cytoplasm. The enzyme catalyses ATP = 3',5'-cyclic AMP + diphosphate. Specifically activated by the G alpha protein GNAL/G(olf) in signaling cascades triggered by odorant receptors. Activated by forskolin. After forskolin treatment, activity is further increased by calcium/calmodulin. In the absence of forskolin, calcium/calmodulin has little effect on enzyme activity. Catalyzes the formation of the signaling molecule cAMP in response to G-protein signaling. Participates in signaling cascades triggered by odorant receptors via its function in cAMP biosynthesis: specifically activated by G alpha protein GNAL/G(olf) in olfactory epithelium. Required for the perception of odorants. Required for normal sperm motility and normal male fertility. Plays a role in regulating insulin levels and body fat accumulation in response to a high fat diet. This Mus musculus (Mouse) protein is Adenylate cyclase type 3 (Adcy3).